A 677-amino-acid chain; its full sequence is Mitochondrial disaggregase (677 aa).

Residues 1-57 (MMLSAVLRRTAPAPRLFLGLIKSPSLQSRGGAYNRSVITGDRGEPQRLRTAAWVRPG) constitute a mitochondrion transit peptide. The disordered stretch occupies residues 64 to 103 (PGRGAATGGRRGERTEIPYLTAASSGRGPSPEETLPGQDS). An autoinhibitory region spans residues 92-126 (PSPEETLPGQDSWNGVPNKAGLGMWALAMALVVQC). ANK repeat units follow at residues 133-162 (NKDA…DVNA), 166-195 (LGWT…DPNL), 235-265 (KGCT…PLQR), and 268-297 (MGHT…EKQR). His-316, Ile-318, Ser-353, Gly-354, Ile-355, Gly-356, Lys-357, Thr-358, Glu-425, and Asn-466 together coordinate ATP. The segment at 477–505 (LQLRQEALEMSRNRIAENLGDVQISDKIT) is regulatory; slows ATPase and disaggregase activities. Position 531 (Arg-531) interacts with ATP. N6-acetyllysine is present on Lys-559. Arg-590 is an ATP binding site.

The protein belongs to the ClpA/ClpB family. Homododecamer when substrate-bound; the homododecamer consists of 2 homohexamers stacked head-to-head via ANK repeat-mediated interactions. The active substrate-bound form is likely to exist in a dynamic equilibrium between homohexamers and homododecamers. Homotetradecamer in the unbound state which is remodeled upon substrate binding into the homododecamer. Interacts with PHB and PHB2. Interacts with MAVS; the interaction is enhanced by Sendai virus infection. Proteolytically cleaved by protease PARL. ATP-dependent protein disaggregase activity is stimulated by PARL-mediated cleavage of the N-terminal autoinhibitory peptide.

It localises to the mitochondrion intermembrane space. The enzyme catalyses ATP + H2O = ADP + phosphate + H(+). With respect to regulation, disaggregase activity is inhibited by ADP. Its function is as follows. Functions as a regulatory ATPase and participates in secretion/protein trafficking process. Has ATP-dependent protein disaggregase activity and is required to maintain the solubility of key mitochondrial proteins. Involved in mitochondrial-mediated antiviral innate immunity, activates RIG-I-mediated signal transduction and production of IFNB1 and pro-inflammatory cytokine IL6. Plays a role in granulocyte differentiation. In Rattus norvegicus (Rat), this protein is Mitochondrial disaggregase.